The following is a 129-amino-acid chain: METKNAKAIARKVSIAPRKARLVVDLIRGKNIAQAQAILTFTPKVAAPVILKLLNSAISNAVNNLKLNREQLYVKEVFVNEGLRLKRMFPRAKGSGDMIKKRTSHITLVITSSTNLQTSKEEEQSGSKN.

The protein belongs to the universal ribosomal protein uL22 family. In terms of assembly, part of the 50S ribosomal subunit.

In terms of biological role, this protein binds specifically to 23S rRNA; its binding is stimulated by other ribosomal proteins, e.g. L4, L17, and L20. It is important during the early stages of 50S assembly. It makes multiple contacts with different domains of the 23S rRNA in the assembled 50S subunit and ribosome. Functionally, the globular domain of the protein is located near the polypeptide exit tunnel on the outside of the subunit, while an extended beta-hairpin is found that lines the wall of the exit tunnel in the center of the 70S ribosome. The protein is Large ribosomal subunit protein uL22 of Phytoplasma sp. (strain STRAWB2).